A 421-amino-acid chain; its full sequence is UDP-N-acetylglucosamine 1-carboxyvinyltransferase (421 aa).

22–23 (KN) contacts phosphoenolpyruvate. UDP-N-acetyl-alpha-D-glucosamine is bound at residue Arg-93. Cys-117 functions as the Proton donor in the catalytic mechanism. Cys-117 carries the post-translational modification 2-(S-cysteinyl)pyruvic acid O-phosphothioketal. Residues 122–126 (RPVDL), Asp-308, and Ile-330 contribute to the UDP-N-acetyl-alpha-D-glucosamine site.

It belongs to the EPSP synthase family. MurA subfamily.

It is found in the cytoplasm. The enzyme catalyses phosphoenolpyruvate + UDP-N-acetyl-alpha-D-glucosamine = UDP-N-acetyl-3-O-(1-carboxyvinyl)-alpha-D-glucosamine + phosphate. It participates in cell wall biogenesis; peptidoglycan biosynthesis. In terms of biological role, cell wall formation. Adds enolpyruvyl to UDP-N-acetylglucosamine. The chain is UDP-N-acetylglucosamine 1-carboxyvinyltransferase from Pseudomonas savastanoi pv. phaseolicola (strain 1448A / Race 6) (Pseudomonas syringae pv. phaseolicola (strain 1448A / Race 6)).